Here is a 340-residue protein sequence, read N- to C-terminus: ATPase get3 (340 aa).

34-41 (KGGVGKTT) provides a ligand contact to ATP. The active site involves D63. E242 and N269 together coordinate ATP. Residues C280 and C283 each contribute to the Zn(2+) site.

The protein belongs to the arsA ATPase family. In terms of assembly, homodimer.

The protein resides in the cytoplasm. It is found in the endoplasmic reticulum. ATPase required for the post-translational delivery of tail-anchored (TA) proteins to the endoplasmic reticulum. Recognizes and selectively binds the transmembrane domain of TA proteins in the cytosol. This complex then targets to the endoplasmic reticulum by membrane-bound receptors, where the tail-anchored protein is released for insertion. This process is regulated by ATP binding and hydrolysis. ATP binding drives the homodimer towards the closed dimer state, facilitating recognition of newly synthesized TA membrane proteins. ATP hydrolysis is required for insertion. Subsequently, the homodimer reverts towards the open dimer state, lowering its affinity for the membrane-bound receptor, and returning it to the cytosol to initiate a new round of targeting. This Sclerotinia sclerotiorum (strain ATCC 18683 / 1980 / Ss-1) (White mold) protein is ATPase get3 (get3).